We begin with the raw amino-acid sequence, 195 residues long: uncharacterized protein (195 aa).

Disordered regions lie at residues 1 to 51 (MTHN…GPSY) and 160 to 195 (SYSQ…KSCN). Positions 13–28 (SYQNQAPQPQYYTRQP) are enriched in polar residues. The span at 170–189 (YYKKHKHHSHHRPKHVKSSR) shows a compositional bias: basic residues.

This is an uncharacterized protein from Acanthamoeba polyphaga mimivirus (APMV).